The sequence spans 353 residues: MSGEGLVSAAAAPEEQAFEAGLRPKNLDEFVGQRKVREQLSIMLEGARGRGRPPDHVLLSGPPGLGKTSLAMIIAEELGVPLRMTSGPAIERAGDLVAILTALTPGEVLFLDEIHRIARPAEELLYAAMEDFRVDVVLGKGPGATAIPLDLAPFTLVGATTRSGLLTGPLRDRFGFTAHMDFYDAAELALVLTRSARLLGVQLTEGGAAEVAGRSRGTPRIANRLLRRVRDYAEVRADGVVSREVARAALRIYDVDALGLDRLDRAVLDALVRRFGGGPVGLSTLAVAVGEEADTVEDVSEPFLLRAGLLIRTARGRVATPAAFTHLGLEPQSDQLGRSQAPAALFGEDLPAS.

Positions 1 to 183 (MSGEGLVSAA…FGFTAHMDFY (183 aa)) are large ATPase domain (RuvB-L). ATP contacts are provided by residues L22, R23, G64, K67, T68, S69, 130 to 132 (EDF), R173, Y183, and R220. A Mg(2+)-binding site is contributed by T68. The interval 184–254 (DAAELALVLT…VARAALRIYD (71 aa)) is small ATPAse domain (RuvB-S). A head domain (RuvB-H) region spans residues 257–353 (ALGLDRLDRA…ALFGEDLPAS (97 aa)). DNA contacts are provided by R312 and R317.

This sequence belongs to the RuvB family. As to quaternary structure, homohexamer. Forms an RuvA(8)-RuvB(12)-Holliday junction (HJ) complex. HJ DNA is sandwiched between 2 RuvA tetramers; dsDNA enters through RuvA and exits via RuvB. An RuvB hexamer assembles on each DNA strand where it exits the tetramer. Each RuvB hexamer is contacted by two RuvA subunits (via domain III) on 2 adjacent RuvB subunits; this complex drives branch migration. In the full resolvosome a probable DNA-RuvA(4)-RuvB(12)-RuvC(2) complex forms which resolves the HJ.

The protein localises to the cytoplasm. It catalyses the reaction ATP + H2O = ADP + phosphate + H(+). Its function is as follows. The RuvA-RuvB-RuvC complex processes Holliday junction (HJ) DNA during genetic recombination and DNA repair, while the RuvA-RuvB complex plays an important role in the rescue of blocked DNA replication forks via replication fork reversal (RFR). RuvA specifically binds to HJ cruciform DNA, conferring on it an open structure. The RuvB hexamer acts as an ATP-dependent pump, pulling dsDNA into and through the RuvAB complex. RuvB forms 2 homohexamers on either side of HJ DNA bound by 1 or 2 RuvA tetramers; 4 subunits per hexamer contact DNA at a time. Coordinated motions by a converter formed by DNA-disengaged RuvB subunits stimulates ATP hydrolysis and nucleotide exchange. Immobilization of the converter enables RuvB to convert the ATP-contained energy into a lever motion, pulling 2 nucleotides of DNA out of the RuvA tetramer per ATP hydrolyzed, thus driving DNA branch migration. The RuvB motors rotate together with the DNA substrate, which together with the progressing nucleotide cycle form the mechanistic basis for DNA recombination by continuous HJ branch migration. Branch migration allows RuvC to scan DNA until it finds its consensus sequence, where it cleaves and resolves cruciform DNA. The polypeptide is Holliday junction branch migration complex subunit RuvB (Parafrankia sp. (strain EAN1pec)).